Here is a 332-residue protein sequence, read N- to C-terminus: MKVTFEQLKEAFNRVLLARGVAAETADACAEMFARTTESGVYSHGVNRFPRFIQQLDNGDIIPDARPQRITSLGAIEQWDAQRAIGNLTAKKMMDRAIELASDHGIGLVALRNANHWMRGGSYGWQAAEKGYIGICWTNSIAVMPPWGSKECRIGTNPLIVAIPSSPITMIDMSMSMFSYGMLEVNRLAGRELPVDGGFDDEGNLTKEPGVIEKNRRILPMGYWKGSGLSIVLDMIATLLSDGASVAEVTQENSDEYGVSQIFIAIEVDKLIDGATRDAKLQRIMDFVTTAERADENVAIRLPGHEFTRLRDENRRNGITVDDSVWAKIQAL.

The active-site Proton donor is the His-44. Residues 168 to 174, 224 to 225, and 304 to 306 contribute to the NAD(+) site; these read ITMIDMS, WK, and GHE.

This sequence belongs to the LDH2/MDH2 oxidoreductase family. DlgD subfamily. In terms of assembly, homodimer.

It localises to the cytoplasm. It catalyses the reaction 3-dehydro-L-gulonate + NAD(+) = 2,3-dioxo-L-gulonate + NADH + H(+). The catalysed reaction is 3-dehydro-L-gulonate + NADP(+) = 2,3-dioxo-L-gulonate + NADPH + H(+). Its function is as follows. Catalyzes the reduction of 2,3-diketo-L-gulonate in the presence of NADH, to form 3-keto-L-gulonate. The protein is 2,3-diketo-L-gulonate reductase of Citrobacter koseri (strain ATCC BAA-895 / CDC 4225-83 / SGSC4696).